A 156-amino-acid polypeptide reads, in one-letter code: Small ribosomal subunit protein uS7cz/uS7cy (156 aa).

This sequence belongs to the universal ribosomal protein uS7 family. Part of the 30S ribosomal subunit.

The protein resides in the plastid. It localises to the chloroplast. One of the primary rRNA binding proteins, it binds directly to 16S rRNA where it nucleates assembly of the head domain of the 30S subunit. The protein is Small ribosomal subunit protein uS7cz/uS7cy (rps7-A) of Triticum aestivum (Wheat).